Consider the following 567-residue polypeptide: Potassium-transporting ATPase potassium-binding subunit (567 aa).

12 helical membrane passes run 5 to 25 (GWLQ…PLGG), 64 to 84 (TTYS…LYFL), 136 to 156 (GFTV…IALI), 179 to 199 (LYVL…LGVP), 254 to 274 (ISNL…TNVF), 285 to 305 (WAIL…TYWA), 328 to 350 (VRFG…CGAV), 375 to 395 (IVGG…IAIF), 421 to 441 (MLAV…SVVL), 459 to 481 (ILYA…SANT), 486 to 506 (ITLG…ALAI), and 529 to 549 (LFVG…FFPA).

Belongs to the KdpA family. In terms of assembly, the system is composed of three essential subunits: KdpA, KdpB and KdpC.

It localises to the cell inner membrane. Its function is as follows. Part of the high-affinity ATP-driven potassium transport (or Kdp) system, which catalyzes the hydrolysis of ATP coupled with the electrogenic transport of potassium into the cytoplasm. This subunit binds the periplasmic potassium ions and delivers the ions to the membrane domain of KdpB through an intramembrane tunnel. The polypeptide is Potassium-transporting ATPase potassium-binding subunit (Rhizobium rhizogenes (strain K84 / ATCC BAA-868) (Agrobacterium radiobacter)).